A 157-amino-acid chain; its full sequence is Small ribosomal subunit protein uS7 (157 aa).

Belongs to the universal ribosomal protein uS7 family. Part of the 30S ribosomal subunit. Contacts proteins S9 and S11.

Its function is as follows. One of the primary rRNA binding proteins, it binds directly to 16S rRNA where it nucleates assembly of the head domain of the 30S subunit. Is located at the subunit interface close to the decoding center, probably blocks exit of the E-site tRNA. The chain is Small ribosomal subunit protein uS7 from Caldicellulosiruptor bescii (strain ATCC BAA-1888 / DSM 6725 / KCTC 15123 / Z-1320) (Anaerocellum thermophilum).